Consider the following 248-residue polypeptide: Ubiquinone biosynthesis O-methyltransferase (248 aa).

Arg-41, Gly-72, Asp-93, and Met-136 together coordinate S-adenosyl-L-methionine.

Belongs to the methyltransferase superfamily. UbiG/COQ3 family.

The enzyme catalyses a 3-demethylubiquinol + S-adenosyl-L-methionine = a ubiquinol + S-adenosyl-L-homocysteine + H(+). It catalyses the reaction a 3-(all-trans-polyprenyl)benzene-1,2-diol + S-adenosyl-L-methionine = a 2-methoxy-6-(all-trans-polyprenyl)phenol + S-adenosyl-L-homocysteine + H(+). The protein operates within cofactor biosynthesis; ubiquinone biosynthesis. Functionally, O-methyltransferase that catalyzes the 2 O-methylation steps in the ubiquinone biosynthetic pathway. This is Ubiquinone biosynthesis O-methyltransferase from Sinorhizobium fredii (strain NBRC 101917 / NGR234).